Consider the following 65-residue polypeptide: Alpha-conotoxin BnIA (65 aa).

The signal sequence occupies residues 1–21 (MGMRMMFTMFLLVVLATTVVS). The propeptide occupies 22–48 (FASDRASDGRNAAAKDKASDLVALTVK). 2 cysteine pairs are disulfide-bonded: cysteine 50-cysteine 56 and cysteine 51-cysteine 64. Residues 52–54 (SHP) are ser-Xaa-Pro motif, crucial for potent interaction with nAChR. Cysteine 64 bears the Cysteine amide mark.

This sequence belongs to the conotoxin A superfamily. In terms of tissue distribution, expressed by the venom duct.

The protein resides in the secreted. Functionally, alpha-conotoxins act on postsynaptic membranes, they bind to the nicotinic acetylcholine receptors (nAChR) and thus inhibit them. This toxin inhibits acetylcholine-evoked currents reversibly in oocytes expressing the human alpha-7/CHRNA7 nAChR, and blocks nerve-evoked skeletal muscle contractions in isolated mouse neuromuscular preparations, but with a very low affinity. This Conus bandanus (Banded marble cone) protein is Alpha-conotoxin BnIA.